The sequence spans 370 residues: Cytochrome b (370 aa).

Helical transmembrane passes span 25–45 (FGSMLLACLTLQLLTGFFLAV), 69–90 (WMMQNLHAIGASMFFICIYIHI), 105–125 (WLSGTTLLIMLMATAFFGYVL), and 170–190 (FFALHFILPFGIISLSSLHIL). 2 residues coordinate heme b: histidine 75 and histidine 89. 2 residues coordinate heme b: histidine 174 and histidine 188. Position 193 (histidine 193) interacts with a ubiquinone. 4 helical membrane-spanning segments follow: residues 218-238 (YKDMLMLTIMTIMLLTIVSFF), 280-300 (LGGALALTMSIMMLLTLPFTH), 312-332 (LMQLTFWTFTATFLVISWTAT), and 339-358 (FTTISQVAALMYFLFFISNP).

This sequence belongs to the cytochrome b family. In terms of assembly, the cytochrome bc1 complex contains 3 respiratory subunits (MT-CYB, CYC1 and UQCRFS1), 2 core proteins (UQCRC1 and UQCRC2) and probably 6 low-molecular weight proteins. The cofactor is heme b.

The protein resides in the mitochondrion inner membrane. Component of the ubiquinol-cytochrome c reductase complex (complex III or cytochrome b-c1 complex) that is part of the mitochondrial respiratory chain. The b-c1 complex mediates electron transfer from ubiquinol to cytochrome c. Contributes to the generation of a proton gradient across the mitochondrial membrane that is then used for ATP synthesis. This Chilabothrus strigilatus strigilatus (New Providence boa constrictor) protein is Cytochrome b (MT-CYB).